Reading from the N-terminus, the 192-residue chain is Probable molybdenum cofactor guanylyltransferase (192 aa).

GTP-binding positions include 8 to 10, Lys-20, Asp-69, and Asp-94; that span reads LAG. Asp-94 lines the Mg(2+) pocket.

The protein belongs to the MobA family. Requires Mg(2+) as cofactor.

The protein resides in the cytoplasm. The catalysed reaction is Mo-molybdopterin + GTP + H(+) = Mo-molybdopterin guanine dinucleotide + diphosphate. Its function is as follows. Transfers a GMP moiety from GTP to Mo-molybdopterin (Mo-MPT) cofactor (Moco or molybdenum cofactor) to form Mo-molybdopterin guanine dinucleotide (Mo-MGD) cofactor. The polypeptide is Probable molybdenum cofactor guanylyltransferase (Pyrococcus horikoshii (strain ATCC 700860 / DSM 12428 / JCM 9974 / NBRC 100139 / OT-3)).